A 505-amino-acid chain; its full sequence is Deoxyguanosinetriphosphate triphosphohydrolase (505 aa).

Positions 66 to 273 (RLTHSMEVQQ…MEAADDISYC (208 aa)) constitute an HD domain.

Belongs to the dGTPase family. Type 1 subfamily. Homotetramer. Mg(2+) is required as a cofactor.

The enzyme catalyses dGTP + H2O = 2'-deoxyguanosine + triphosphate + H(+). DGTPase preferentially hydrolyzes dGTP over the other canonical NTPs. This is Deoxyguanosinetriphosphate triphosphohydrolase from Shigella boydii serotype 4 (strain Sb227).